The chain runs to 829 residues: Potassium voltage-gated channel unc-103 (829 aa).

Residues 1–76 (MKTAVFGRDS…PRASHSSRRT (76 aa)) form a disordered region. Over 1 to 123 (MKTAVFGRDS…YSPFKAVWDW (123 aa)) the chain is Cytoplasmic. A compositionally biased stretch (gly residues) spans 46-66 (GVSGTGGGGSGGLQGAPGAGG). A helical transmembrane segment spans residues 124–144 (IILLLVIYTAVFTPYVAAFLL). Over 145-158 (RELQDTAKKSRFTE) the chain is Extracellular. A helical transmembrane segment spans residues 159-179 (PLEIVDLIVDIMFIVDIIINF). Topologically, residues 180–203 (RTTYVNENDEACQVVSDPGKIATH) are cytoplasmic. Residues 204–224 (YFKGWFIIDMVAAVPFDLLLV) traverse the membrane as a helical segment. The Extracellular segment spans residues 225–234 (STNSDETTTL). A helical; Voltage-sensor membrane pass occupies residues 235–255 (IGLLKTARLLRLVRVARKLDR). Residues 256 to 261 (YSEYGA) are Cytoplasmic-facing. Residues 262–282 (AVLLLLMATFALIAHWLACIW) form a helical membrane-spanning segment. Over 283–327 (YAIGSAELSHKEYTWLHQLSKQLAQPYTSTNGTIPTGGPTLKSRY) the chain is Extracellular. Asn313 carries N-linked (GlcNAc...) asparagine glycosylation. Positions 328–348 (VTSLYFTLSTITSIGFGNVSA) form an intramembrane region, pore-forming. Over 349–354 (TTDSEK) the chain is Extracellular. The chain crosses the membrane as a helical span at residues 355-375 (IFTIIMMILGSLMYASVFGNV). Residues 376-829 (SAIIQRLYSG…TPTQETDTIL (454 aa)) lie on the Cytoplasmic side of the membrane. A nucleoside 3',5'-cyclic phosphate is bound at residue 458-559 (AFAGSTPGCL…ILRDDLLDVL (102 aa)). Residues 601-674 (SMNKDRYTTP…PLLRRSTNHH (74 aa)) are disordered. Residues 603 to 615 (NKDRYTTPPDGDH) are compositionally biased toward basic and acidic residues. A compositionally biased stretch (low complexity) spans 640–650 (SAGSRSSSRCS).

The protein belongs to the potassium channel family. H (Eag) (TC 1.A.1.20) subfamily. Kv11.1/KCNH2 sub-subfamily. In terms of assembly, the potassium channel is composed of a homo- or heterotetrameric complex. Interacts with dnj-1; dnj-1 chaperone promotes tetramerization.

The protein resides in the cell membrane. In terms of biological role, pore-forming (alpha) subunit of voltage-gated inwardly rectifying potassium channel. Channel properties are modulated by cAMP and subunit assembly. Regulates the movements of the male's copulatory spicules before and during male mating behavior. The chain is Potassium voltage-gated channel unc-103 from Caenorhabditis elegans.